The sequence spans 378 residues: Chaperone protein DnaJ (378 aa).

The J domain occupies 5–70 (DYYQILGIPK…EKRTAYDQYG (66 aa)). Residues 133 to 211 (GTTKEIRIPT…CRGQGRIKTN (79 aa)) form a CR-type zinc finger. Cysteine 146, cysteine 149, cysteine 163, cysteine 166, cysteine 185, cysteine 188, cysteine 199, and cysteine 202 together coordinate Zn(2+). 4 CXXCXGXG motif repeats span residues 146–153 (CKTCYGMG), 163–170 (CSTCHGKG), 185–192 (CPTCNGIG), and 199–206 (CRMCRGQG).

This sequence belongs to the DnaJ family. In terms of assembly, homodimer. Zn(2+) is required as a cofactor.

Its subcellular location is the cytoplasm. Its function is as follows. Participates actively in the response to hyperosmotic and heat shock by preventing the aggregation of stress-denatured proteins and by disaggregating proteins, also in an autonomous, DnaK-independent fashion. Unfolded proteins bind initially to DnaJ; upon interaction with the DnaJ-bound protein, DnaK hydrolyzes its bound ATP, resulting in the formation of a stable complex. GrpE releases ADP from DnaK; ATP binding to DnaK triggers the release of the substrate protein, thus completing the reaction cycle. Several rounds of ATP-dependent interactions between DnaJ, DnaK and GrpE are required for fully efficient folding. Also involved, together with DnaK and GrpE, in the DNA replication of plasmids through activation of initiation proteins. This Buchnera aphidicola subsp. Schizaphis graminum (strain Sg) protein is Chaperone protein DnaJ.